Consider the following 823-residue polypeptide: MSTAQRRVQELEKLILHHQDRYYNAESDISDDAFDALWEELARLDPGNPLLKAIGSDSQRDAVKKRHIVPMGSQHKAADEESFSAWAKKNALQAFLVQHKLDGVSLELQYERGHFCCALTRGNGIVGDDVTANVRGMRGFVPTLTAEWGPCGNLPFTGGVRGEVIMHKDIHRSHYPTHANCRNTVNGILKRKDGRGRTHLHIVCYDAVPGTPGKPFTGSLPFADETEKLAWLARQGFVTVHSHRCANAQEVVALRSEIMRTRELLPYSIDGLVVKSTDLDFQDAQLPRPKKQIAFKFSTQEAITTLRDVQWQTSGVTYTPIGITDPVRLAGTTVKRANLCNPNMLTKLCLKIGSHVLISKRGEIIPKIEALVSTPAHAQEIHIPTQCTSCNTVLENSGSRLFCPNVNCPLLSHHRITRWIECLEIKHVGTELIQRLFEEKKVRRIPDLYTLTCEDLIEIEHVGNATAKKILEAIHHKKEIALQTFIAGFGIEGIGETMGEKLICAGFDTLEKVLHATTETLESIYQFGTELAKSVVTGIARVKDDMCELLDRGFVRILAKQQAESPLRGKSFCFSGSLRNGDRATIHRIRALGGVVRTSVTRDLSYLIFESLSQPYRTAQKLKKEQGVALEIISEDEFCRLLDQASASCTHTGETVHPLQGKSFYFSGASRSMNHKHAQEKVRALGGDVASSVTAQLDYLVFYSQSTRYRTACALGIQIISEETLHKLIATAQSPLHTDAHVHAPLHGMSFCFSGDLDGMTRAQAIALVQRLGGTVKTAVSTQLTYLVSNDPHGQSRKCQNAVRCGVRIISEHVFLALCTPGT.

NAD(+) is bound by residues 31 to 35 (DDAFD) and 73 to 74 (SQ). The N6-AMP-lysine intermediate role is filled by K100. R121, E163, K275, and K296 together coordinate NAD(+). Positions 387, 390, 403, and 408 each coordinate Zn(2+). BRCT domains are found at residues 562 to 655 (QAES…TGET), 654 to 742 (ETVH…DAHV), and 741 to 823 (HVHA…TPGT).

This sequence belongs to the NAD-dependent DNA ligase family. LigA subfamily. Requires Mg(2+) as cofactor. Mn(2+) is required as a cofactor.

The catalysed reaction is NAD(+) + (deoxyribonucleotide)n-3'-hydroxyl + 5'-phospho-(deoxyribonucleotide)m = (deoxyribonucleotide)n+m + AMP + beta-nicotinamide D-nucleotide.. In terms of biological role, DNA ligase that catalyzes the formation of phosphodiester linkages between 5'-phosphoryl and 3'-hydroxyl groups in double-stranded DNA using NAD as a coenzyme and as the energy source for the reaction. It is essential for DNA replication and repair of damaged DNA. The polypeptide is DNA ligase (Treponema pallidum (strain Nichols)).